Here is a 901-residue protein sequence, read N- to C-terminus: Pantothenate kinase 2 (901 aa).

Residues 1–10 (MAGQEDEYDP) show a composition bias toward acidic residues. The interval 1–50 (MAGQEDEYDPILDNKREAEAKSQVSVAADKNMAPSTSGTPIHRSGSRPQL) is disordered. Residues 1–466 (MAGQEDEYDP…LGDLDEKISW (466 aa)) are pantothenate kinase. The tract at residues 467–901 (MEKFVRRGTE…CVCRYEPPSL (435 aa)) is 4'-phosphopantetheine phosphatase. Residues Asp-731, Asn-732, and Asp-767 each contribute to the Mn(2+) site. The short motif at 851 to 855 (EGMGR) is the Subfamily II EGMGR motif element.

It in the N-terminal section; belongs to the type II pantothenate kinase family. This sequence in the C-terminal section; belongs to the damage-control phosphatase family. Phosphopantetheine phosphatase II subfamily. It depends on Mn(2+) as a cofactor. Requires Ni(2+) as cofactor. Highly expressed in leaves and developing seeds. Expressed in roots, stems and flowers.

It catalyses the reaction (R)-pantothenate + ATP = (R)-4'-phosphopantothenate + ADP + H(+). The catalysed reaction is (R)-4'-phosphopantothenate + H2O = (R)-pantothenate + phosphate. It carries out the reaction (R)-4'-phosphopantetheine + H2O = (R)-pantetheine + phosphate. The enzyme catalyses (R)-4'-phosphopantetheine sulfonate + H2O = (R)-pantetheine sulfonate + phosphate. It functions in the pathway cofactor biosynthesis; coenzyme A biosynthesis; CoA from (R)-pantothenate: step 1/5. Its activity is regulated as follows. Activity is strongly promoted by Co(2+), Ni(2+) and Mn(2+). Activity is inhibited by EDTA. Catalyzes the phosphorylation of pantothenate the first step in CoA biosynthesis. May play a role in the physiological regulation of the intracellular CoA concentration. Functionally redudant with PANK1. The phosphatase activity shows preference for normal or oxidatively damaged intermediates of 4'-phosphopantetheine, which provides strong indirect evidence that the phosphatase activity pre-empts damage in the CoA pathway. Hydrolyzing excess 4'-phosphopantetheine could constitute a directed overflow mechanism to prevent its oxidation to the S-sulfonate, sulfonate, or other forms. Hydrolyzing 4'-phosphopantetheine sulfonate or S-sulfonate would forestall their conversion to inactive forms of CoA and acyl carrier protein. This Arabidopsis thaliana (Mouse-ear cress) protein is Pantothenate kinase 2 (PANK2).